The primary structure comprises 512 residues: PTS system mannitol-specific EIICB component (512 aa).

Residues 1 to 28 (MSQTEEKKGIGRRVQAFGSFLSSMIMPN) are Cytoplasmic-facing. Residues 17-349 (FGSFLSSMIM…MKFTKEPKQD (333 aa)) enclose the PTS EIIC type-2 domain. Residues 29–50 (IGAFIAWGFIAAIFIDNGWFPN) traverse the membrane as a helical segment. Residues 51–54 (KDLA) are Extracellular-facing. Residues 55-75 (TLAGPMITYLIPLLIAFSGGR) traverse the membrane as a helical segment. Residues 76–139 (LIYDLRGGII…QGFEMLFNNF (64 aa)) lie on the Cytoplasmic side of the membrane. A helical transmembrane segment spans residues 140-161 (SAGILGFIMTIAGFKILAPLMK). Topologically, residues 162–170 (FIMHILSVA) are extracellular. The chain crosses the membrane as a helical span at residues 171–191 (VEALVHAHLLPLVSILVEPAK). The Cytoplasmic segment spans residues 192–278 (IVFLNNAINH…VLMRPLLFIA (87 aa)). A helical membrane pass occupies residues 279 to 298 (VILGGMTGVATYQATGFGFK). The Extracellular segment spans residues 299 to 318 (SPASPGSFIVYCLNAPRGEF). A helical membrane pass occupies residues 319–340 (LHMLLGVFLATLVSFVVAALIM). Over 341-512 (KFTKEPKQDL…LNNLKKDDQA (172 aa)) the chain is Cytoplasmic. Over residues 365 to 376 (SSVASKLVSSDK) the composition is skewed to low complexity. Residues 365-401 (SSVASKLVSSDKNVNTEENASGNVSETSSLDDDPEAL) are disordered. The span at 380 to 392 (TEENASGNVSETS) shows a compositional bias: polar residues. The region spanning 419–512 (NHVIFACDAG…LNNLKKDDQA (94 aa)) is the PTS EIIB type-2 domain. Residue cysteine 425 is the Phosphocysteine intermediate; for EIIB activity of the active site. Position 425 is a phosphocysteine; by EIIA (cysteine 425).

Homodimer.

It localises to the cell membrane. It catalyses the reaction D-mannitol(out) + N(pros)-phospho-L-histidyl-[protein] = D-mannitol 1-phosphate(in) + L-histidyl-[protein]. The phosphoenolpyruvate-dependent sugar phosphotransferase system (sugar PTS), a major carbohydrate active transport system, catalyzes the phosphorylation of incoming sugar substrates concomitantly with their translocation across the cell membrane. The enzyme II CmtAB PTS system is involved in D-mannitol transport. This is PTS system mannitol-specific EIICB component (mtlA) from Staphylococcus aureus (strain MRSA252).